We begin with the raw amino-acid sequence, 322 residues long: Ferrochelatase (322 aa).

Fe cation-binding residues include His-193 and Glu-274.

This sequence belongs to the ferrochelatase family.

The protein localises to the cytoplasm. The catalysed reaction is heme b + 2 H(+) = protoporphyrin IX + Fe(2+). It participates in porphyrin-containing compound metabolism; protoheme biosynthesis; protoheme from protoporphyrin-IX: step 1/1. Catalyzes the ferrous insertion into protoporphyrin IX. This Aliivibrio fischeri (strain MJ11) (Vibrio fischeri) protein is Ferrochelatase.